A 231-amino-acid chain; its full sequence is 7-cyano-7-deazaguanine synthase (231 aa).

8–18 (FSGGQDSTTCL) contacts ATP. Zn(2+)-binding residues include cysteine 188, cysteine 197, cysteine 200, and cysteine 203.

Belongs to the QueC family. The cofactor is Zn(2+).

The enzyme catalyses 7-carboxy-7-deazaguanine + NH4(+) + ATP = 7-cyano-7-deazaguanine + ADP + phosphate + H2O + H(+). It participates in purine metabolism; 7-cyano-7-deazaguanine biosynthesis. Its function is as follows. Catalyzes the ATP-dependent conversion of 7-carboxy-7-deazaguanine (CDG) to 7-cyano-7-deazaguanine (preQ(0)). This chain is 7-cyano-7-deazaguanine synthase, found in Escherichia coli (strain ATCC 8739 / DSM 1576 / NBRC 3972 / NCIMB 8545 / WDCM 00012 / Crooks).